The chain runs to 609 residues: Glutamine--fructose-6-phosphate aminotransferase [isomerizing] (609 aa).

Cys-2 (nucleophile; for GATase activity) is an active-site residue. Residues 2–217 (CGIVGAIAGR…DGDTAEIRRD (216 aa)) enclose the Glutamine amidotransferase type-2 domain. SIS domains lie at 285–425 (AESV…LRGA) and 458–599 (WAEC…VDKP). Lys-604 (for Fru-6P isomerization activity) is an active-site residue.

In terms of assembly, homodimer.

The protein localises to the cytoplasm. The catalysed reaction is D-fructose 6-phosphate + L-glutamine = D-glucosamine 6-phosphate + L-glutamate. Catalyzes the first step in hexosamine metabolism, converting fructose-6P into glucosamine-6P using glutamine as a nitrogen source. In Xylella fastidiosa (strain Temecula1 / ATCC 700964), this protein is Glutamine--fructose-6-phosphate aminotransferase [isomerizing].